We begin with the raw amino-acid sequence, 98 residues long: DNA-binding protein Fis (98 aa).

The segment at residues 74-93 (QTRAALMMGINRGTLRKKLK) is a DNA-binding region (H-T-H motif).

This sequence belongs to the transcriptional regulatory Fis family. In terms of assembly, homodimer.

Activates ribosomal RNA transcription. Plays a direct role in upstream activation of rRNA promoters. The chain is DNA-binding protein Fis from Citrobacter koseri (strain ATCC BAA-895 / CDC 4225-83 / SGSC4696).